Here is a 1272-residue protein sequence, read N- to C-terminus: AF4/FMR2 family member 2 (1272 aa).

2 disordered regions span residues 93-183 (IPKN…LTQD) and 200-223 (PQIGEVEESNPSAKEDSNPKSSGE). Residues 97-107 (SVPQNPNNKNE) show a composition bias toward polar residues. Positions 151 to 160 (SKPEWSRDSH) are enriched in basic and acidic residues. A compositionally biased stretch (polar residues) spans 161 to 183 (NPSTVLASQASGQPNKMQTLTQD). The span at 212–223 (AKEDSNPKSSGE) shows a compositional bias: basic and acidic residues. A Phosphoserine modification is found at Ser-391. Disordered stretches follow at residues 418–491 (KAKP…KWQL), 535–687 (TNAS…DQEE), 779–829 (SLHA…PEKK), and 842–903 (PPCI…QDKN). Over residues 426–438 (VNPPLATPQPPPA) the composition is skewed to pro residues. Low complexity predominate over residues 439 to 452 (VQASGGSGSSSESE). At Thr-478 the chain carries Phosphothreonine. Over residues 543-558 (EPKERPLLSLIREKAR) the composition is skewed to basic and acidic residues. A compositionally biased stretch (polar residues) spans 576–586 (STTSETVSQRT). The segment covering 616–629 (PKEKESVELHDPPR) has biased composition (basic and acidic residues). The span at 630–640 (GRNKATAHKPA) shows a compositional bias: basic residues. Residues 818–829 (PTEVAEKIPEKK) are compositionally biased toward basic and acidic residues. Pro residues-rich tracts occupy residues 844-853 (CISPAPPHKP) and 874-883 (FPPPLSPLPE).

It belongs to the AF4 family.

The protein resides in the nucleus speckle. Functionally, RNA-binding protein. Might be involved in alternative splicing regulation through an interaction with G-quartet RNA structure. The protein is AF4/FMR2 family member 2 (AFF2) of Pongo pygmaeus (Bornean orangutan).